The chain runs to 226 residues: Ribosomal RNA large subunit methyltransferase E (226 aa).

The disordered stretch occupies residues 1–25 (MVKPPAGGNEGGRGKPARLKTAYGR). The S-adenosyl-L-methionine site is built by Gly-82, Trp-84, Asp-100, Asp-116, and Asp-140. The active-site Proton acceptor is the Lys-180.

It belongs to the class I-like SAM-binding methyltransferase superfamily. RNA methyltransferase RlmE family.

It is found in the cytoplasm. The enzyme catalyses uridine(2552) in 23S rRNA + S-adenosyl-L-methionine = 2'-O-methyluridine(2552) in 23S rRNA + S-adenosyl-L-homocysteine + H(+). In terms of biological role, specifically methylates the uridine in position 2552 of 23S rRNA at the 2'-O position of the ribose in the fully assembled 50S ribosomal subunit. In Caulobacter vibrioides (strain ATCC 19089 / CIP 103742 / CB 15) (Caulobacter crescentus), this protein is Ribosomal RNA large subunit methyltransferase E.